The sequence spans 621 residues: UvrABC system protein C (621 aa).

In terms of domain architecture, GIY-YIG spans 13–92 (EKPGVYLMKN…IKKYRPRYNI (80 aa)). Residues 204–239 (NEVINDLKIKMEKASSELKFEEAASFRDKLLAVEKI) form the UVR domain.

It belongs to the UvrC family. In terms of assembly, interacts with UvrB in an incision complex.

The protein resides in the cytoplasm. Functionally, the UvrABC repair system catalyzes the recognition and processing of DNA lesions. UvrC both incises the 5' and 3' sides of the lesion. The N-terminal half is responsible for the 3' incision and the C-terminal half is responsible for the 5' incision. This chain is UvrABC system protein C, found in Clostridium novyi (strain NT).